The chain runs to 470 residues: Bifunctional protein ArgHA (470 aa).

The argininosuccinate lyase stretch occupies residues 1-470 (MALWGGRFSQ…TSGISIRAAR (470 aa)).

This sequence in the N-terminal section; belongs to the lyase 1 family. Argininosuccinate lyase subfamily. The protein in the C-terminal section; belongs to the acetyltransferase family. ArgA subfamily.

Its subcellular location is the cytoplasm. The catalysed reaction is 2-(N(omega)-L-arginino)succinate = fumarate + L-arginine. The enzyme catalyses L-glutamate + acetyl-CoA = N-acetyl-L-glutamate + CoA + H(+). It participates in amino-acid biosynthesis; L-arginine biosynthesis; N(2)-acetyl-L-ornithine from L-glutamate: step 1/4. Its pathway is amino-acid biosynthesis; L-arginine biosynthesis; L-arginine from L-ornithine and carbamoyl phosphate: step 3/3. The sequence is that of Bifunctional protein ArgHA (argHA) from Moritella profunda.